The primary structure comprises 567 residues: Proline--tRNA ligase (567 aa).

It belongs to the class-II aminoacyl-tRNA synthetase family. ProS type 1 subfamily. Homodimer.

The protein resides in the cytoplasm. The catalysed reaction is tRNA(Pro) + L-proline + ATP = L-prolyl-tRNA(Pro) + AMP + diphosphate. In terms of biological role, catalyzes the attachment of proline to tRNA(Pro) in a two-step reaction: proline is first activated by ATP to form Pro-AMP and then transferred to the acceptor end of tRNA(Pro). As ProRS can inadvertently accommodate and process non-cognate amino acids such as alanine and cysteine, to avoid such errors it has two additional distinct editing activities against alanine. One activity is designated as 'pretransfer' editing and involves the tRNA(Pro)-independent hydrolysis of activated Ala-AMP. The other activity is designated 'posttransfer' editing and involves deacylation of mischarged Ala-tRNA(Pro). The misacylated Cys-tRNA(Pro) is not edited by ProRS. The polypeptide is Proline--tRNA ligase (Fusobacterium nucleatum subsp. nucleatum (strain ATCC 25586 / DSM 15643 / BCRC 10681 / CIP 101130 / JCM 8532 / KCTC 2640 / LMG 13131 / VPI 4355)).